Reading from the N-terminus, the 481-residue chain is Histidine--tRNA ligase, cytoplasmic (481 aa).

The tract at residues 1 to 48 (MSEPVVDNVTNKVEKMEVKEKTSAPPKEKKEKKSNKVQLKTPKGTQDY) is disordered. The segment covering 12 to 31 (KVEKMEVKEKTSAPPKEKKE) has biased composition (basic and acidic residues).

The protein belongs to the class-II aminoacyl-tRNA synthetase family.

It localises to the cytoplasm. The enzyme catalyses tRNA(His) + L-histidine + ATP = L-histidyl-tRNA(His) + AMP + diphosphate + H(+). The polypeptide is Histidine--tRNA ligase, cytoplasmic (hisS) (Dictyostelium discoideum (Social amoeba)).